The following is a 557-amino-acid chain: Urocanate hydratase (557 aa).

Residues 52-53 (GG), Gln130, 176-178 (GMG), Glu196, Arg201, 242-243 (NA), 263-267 (QTSAH), 273-274 (YL), and Tyr322 each bind NAD(+). The active site involves Cys410. Gly492 provides a ligand contact to NAD(+).

It belongs to the urocanase family. NAD(+) serves as cofactor.

The protein localises to the cytoplasm. The catalysed reaction is 4-imidazolone-5-propanoate = trans-urocanate + H2O. The protein operates within amino-acid degradation; L-histidine degradation into L-glutamate; N-formimidoyl-L-glutamate from L-histidine: step 2/3. In terms of biological role, catalyzes the conversion of urocanate to 4-imidazolone-5-propionate. The sequence is that of Urocanate hydratase from Allorhizobium ampelinum (strain ATCC BAA-846 / DSM 112012 / S4) (Agrobacterium vitis (strain S4)).